The chain runs to 420 residues: L-cysteine:1D-myo-inositol 2-amino-2-deoxy-alpha-D-glucopyranoside ligase (420 aa).

Cysteine 48 lines the Zn(2+) pocket. Residues 48–51 (CGIT), threonine 63, and 86–88 (NIT) each bind L-cysteinyl-5'-AMP. The 'HIGH' region motif lies at 50 to 60 (ITPYDSTHLGH). A 'ERGGDP' region motif is present at residues 192-197 (ERGGDP). Residue tryptophan 232 participates in L-cysteinyl-5'-AMP binding. Residue cysteine 236 coordinates Zn(2+). 254-256 (GSD) serves as a coordination point for L-cysteinyl-5'-AMP. Histidine 261 contacts Zn(2+). Isoleucine 288 lines the L-cysteinyl-5'-AMP pocket. The 'KMSKS' region signature appears at 294–298 (KMSKS).

Belongs to the class-I aminoacyl-tRNA synthetase family. MshC subfamily. Monomer. The cofactor is Zn(2+).

It catalyses the reaction 1D-myo-inositol 2-amino-2-deoxy-alpha-D-glucopyranoside + L-cysteine + ATP = 1D-myo-inositol 2-(L-cysteinylamino)-2-deoxy-alpha-D-glucopyranoside + AMP + diphosphate + H(+). In terms of biological role, catalyzes the ATP-dependent condensation of GlcN-Ins and L-cysteine to form L-Cys-GlcN-Ins. The polypeptide is L-cysteine:1D-myo-inositol 2-amino-2-deoxy-alpha-D-glucopyranoside ligase (Corynebacterium glutamicum (strain R)).